The chain runs to 369 residues: tRNA 2-selenouridine synthase (369 aa).

Residues 15 to 138 (MLSGHPMMDV…MRQYLIEVID (124 aa)) form the Rhodanese domain. The active-site S-selanylcysteine intermediate is the cysteine 98.

It belongs to the SelU family. In terms of assembly, monomer.

The enzyme catalyses 5-methylaminomethyl-2-thiouridine(34) in tRNA + selenophosphate + (2E)-geranyl diphosphate + H2O + H(+) = 5-methylaminomethyl-2-selenouridine(34) in tRNA + (2E)-thiogeraniol + phosphate + diphosphate. The catalysed reaction is 5-methylaminomethyl-2-thiouridine(34) in tRNA + (2E)-geranyl diphosphate = 5-methylaminomethyl-S-(2E)-geranyl-thiouridine(34) in tRNA + diphosphate. It carries out the reaction 5-methylaminomethyl-S-(2E)-geranyl-thiouridine(34) in tRNA + selenophosphate + H(+) = 5-methylaminomethyl-2-(Se-phospho)selenouridine(34) in tRNA + (2E)-thiogeraniol. It catalyses the reaction 5-methylaminomethyl-2-(Se-phospho)selenouridine(34) in tRNA + H2O = 5-methylaminomethyl-2-selenouridine(34) in tRNA + phosphate. In terms of biological role, involved in the post-transcriptional modification of the uridine at the wobble position (U34) of tRNA(Lys), tRNA(Glu) and tRNA(Gln). Catalyzes the conversion of 2-thiouridine (S2U-RNA) to 2-selenouridine (Se2U-RNA). Acts in a two-step process involving geranylation of 2-thiouridine (S2U) to S-geranyl-2-thiouridine (geS2U) and subsequent selenation of the latter derivative to 2-selenouridine (Se2U) in the tRNA chain. This is tRNA 2-selenouridine synthase from Shewanella sediminis (strain HAW-EB3).